A 96-amino-acid chain; its full sequence is Large ribosomal subunit protein eL43 (96 aa).

Residues 41–62 (CPVCAFPKLKRAGTSIWVCEKC) form a C4-type zinc finger.

The protein belongs to the eukaryotic ribosomal protein eL43 family. Zn(2+) is required as a cofactor.

This Methanococcus maripaludis (strain C5 / ATCC BAA-1333) protein is Large ribosomal subunit protein eL43.